Reading from the N-terminus, the 139-residue chain is Nucleoside diphosphate kinase (139 aa).

Residues K11, F59, R87, T93, R104, and N114 each contribute to the ATP site. Residue H117 is the Pros-phosphohistidine intermediate of the active site.

This sequence belongs to the NDK family. Homotetramer. Mg(2+) is required as a cofactor.

Its subcellular location is the cytoplasm. It carries out the reaction a 2'-deoxyribonucleoside 5'-diphosphate + ATP = a 2'-deoxyribonucleoside 5'-triphosphate + ADP. The catalysed reaction is a ribonucleoside 5'-diphosphate + ATP = a ribonucleoside 5'-triphosphate + ADP. In terms of biological role, major role in the synthesis of nucleoside triphosphates other than ATP. The ATP gamma phosphate is transferred to the NDP beta phosphate via a ping-pong mechanism, using a phosphorylated active-site intermediate. The polypeptide is Nucleoside diphosphate kinase (Pasteurella multocida (strain Pm70)).